The primary structure comprises 375 residues: DNA replication and repair protein RecF (375 aa).

30-37 (GLNGQGKT) is an ATP binding site.

The protein belongs to the RecF family.

The protein localises to the cytoplasm. Its function is as follows. The RecF protein is involved in DNA metabolism; it is required for DNA replication and normal SOS inducibility. RecF binds preferentially to single-stranded, linear DNA. It also seems to bind ATP. This Halothermothrix orenii (strain H 168 / OCM 544 / DSM 9562) protein is DNA replication and repair protein RecF.